A 299-amino-acid polypeptide reads, in one-letter code: Oxygen-dependent coproporphyrinogen-III oxidase (299 aa).

Residue serine 92 coordinates substrate. Mn(2+) contacts are provided by histidine 96 and histidine 106. Residue histidine 106 is the Proton donor of the active site. 108 to 110 (NVR) contributes to the substrate binding site. Positions 145 and 175 each coordinate Mn(2+). Residues 240-275 (YVEFNLVWDRGTLFGLQTGGRTESILMSMPPLVRWE) form an important for dimerization region. 258-260 (GGR) contributes to the substrate binding site.

This sequence belongs to the aerobic coproporphyrinogen-III oxidase family. Homodimer. The cofactor is Mn(2+).

Its subcellular location is the cytoplasm. It catalyses the reaction coproporphyrinogen III + O2 + 2 H(+) = protoporphyrinogen IX + 2 CO2 + 2 H2O. Its pathway is porphyrin-containing compound metabolism; protoporphyrin-IX biosynthesis; protoporphyrinogen-IX from coproporphyrinogen-III (O2 route): step 1/1. Functionally, involved in the heme biosynthesis. Catalyzes the aerobic oxidative decarboxylation of propionate groups of rings A and B of coproporphyrinogen-III to yield the vinyl groups in protoporphyrinogen-IX. This is Oxygen-dependent coproporphyrinogen-III oxidase from Escherichia coli O7:K1 (strain IAI39 / ExPEC).